Here is a 109-residue protein sequence, read N- to C-terminus: Cell division protein ZapA (109 aa).

Residues 21–99 (PEQLDALNQA…IEQALLEQGR (79 aa)) adopt a coiled-coil conformation.

The protein belongs to the ZapA family. Type 1 subfamily. As to quaternary structure, homodimer. Interacts with FtsZ.

It localises to the cytoplasm. Functionally, activator of cell division through the inhibition of FtsZ GTPase activity, therefore promoting FtsZ assembly into bundles of protofilaments necessary for the formation of the division Z ring. It is recruited early at mid-cell but it is not essential for cell division. This chain is Cell division protein ZapA, found in Edwardsiella ictaluri (strain 93-146).